Here is a 276-residue protein sequence, read N- to C-terminus: Large ribosomal subunit protein uL2 (276 aa).

Residues 208 to 276 (KAGRNRHRGI…KLIISRRKGK (69 aa)) are disordered. The segment covering 230–240 (DHPHGGGEGKK) has biased composition (basic and acidic residues). Residues 255–276 (KGAKTRRKKASDKLIISRRKGK) are compositionally biased toward basic residues.

It belongs to the universal ribosomal protein uL2 family. Part of the 50S ribosomal subunit. Forms a bridge to the 30S subunit in the 70S ribosome.

Functionally, one of the primary rRNA binding proteins. Required for association of the 30S and 50S subunits to form the 70S ribosome, for tRNA binding and peptide bond formation. It has been suggested to have peptidyltransferase activity; this is somewhat controversial. Makes several contacts with the 16S rRNA in the 70S ribosome. The sequence is that of Large ribosomal subunit protein uL2 from Campylobacter lari (strain RM2100 / D67 / ATCC BAA-1060).